The chain runs to 442 residues: GDP-L-galactose phosphorylase 1 (442 aa).

Residue histidine 238 is the Tele-GMP-histidine intermediate of the active site.

It belongs to the GDPGP1 family. In terms of assembly, interacts with TLP1. As to expression, expressed in leaves, stems, roots, flowers and siliques. Highest expression in green tissues.

The protein resides in the cytoplasm. The protein localises to the nucleus. The enzyme catalyses GDP-beta-L-galactose + phosphate = beta-L-galactose 1-phosphate + GDP + H(+). The protein operates within cofactor biosynthesis; L-ascorbate biosynthesis via GDP-alpha-D-mannose pathway; L-ascorbate from GDP-alpha-D-mannose: step 2/5. Not inhibited by dithiothreitol, N-ethylmaleimide, phenylmethane sulfonyl fluoride, ascorbate, L-galactose and L-galactonolactone. Catalyzes a reaction of the Smirnoff-Wheeler pathway, the major route to ascorbate biosynthesis in plants. Acts as a phosphorylase rather than as a transferase. Uses preferentially GDP-L-galactose and GDP-D-glucose as substrates. Lower activity with GDP-L-fucose, very low activity with GDP-D-mannose, and no activity with UDP-D-glucose, UDP-D-galactose or ADP-D-glucose. Highly specific for inorganic phosphate as the guanylyl acceptor. The polypeptide is GDP-L-galactose phosphorylase 1 (VTC2) (Arabidopsis thaliana (Mouse-ear cress)).